The sequence spans 808 residues: Phenylalanine--tRNA ligase beta subunit (808 aa).

Residues 40–157 (NKGATNVVVG…QSVEPGQDAL (118 aa)) form the tRNA-binding domain. Residues 411 to 486 (RSERVIALDL…RLYGYDELPS (76 aa)) form the B5 domain. Residues aspartate 464, aspartate 470, glutamate 473, and glutamate 474 each contribute to the Mg(2+) site. Residues 714–807 (PRYPAITRDM…VQKQTGAVLR (94 aa)) enclose the FDX-ACB domain.

It belongs to the phenylalanyl-tRNA synthetase beta subunit family. Type 1 subfamily. In terms of assembly, tetramer of two alpha and two beta subunits. Mg(2+) serves as cofactor.

It localises to the cytoplasm. The enzyme catalyses tRNA(Phe) + L-phenylalanine + ATP = L-phenylalanyl-tRNA(Phe) + AMP + diphosphate + H(+). This is Phenylalanine--tRNA ligase beta subunit from Shouchella clausii (strain KSM-K16) (Alkalihalobacillus clausii).